Consider the following 354-residue polypeptide: Chorismate synthase (354 aa).

Arg-48 is an NADP(+) binding site. Residues 125-127 (RAS), Gly-277, 292-296 (KPIPS), and Arg-318 contribute to the FMN site.

Belongs to the chorismate synthase family. Homotetramer. It depends on FMNH2 as a cofactor.

The enzyme catalyses 5-O-(1-carboxyvinyl)-3-phosphoshikimate = chorismate + phosphate. Its pathway is metabolic intermediate biosynthesis; chorismate biosynthesis; chorismate from D-erythrose 4-phosphate and phosphoenolpyruvate: step 7/7. Functionally, catalyzes the anti-1,4-elimination of the C-3 phosphate and the C-6 proR hydrogen from 5-enolpyruvylshikimate-3-phosphate (EPSP) to yield chorismate, which is the branch point compound that serves as the starting substrate for the three terminal pathways of aromatic amino acid biosynthesis. This reaction introduces a second double bond into the aromatic ring system. In Nitratidesulfovibrio vulgaris (strain ATCC 29579 / DSM 644 / CCUG 34227 / NCIMB 8303 / VKM B-1760 / Hildenborough) (Desulfovibrio vulgaris), this protein is Chorismate synthase.